The primary structure comprises 169 residues: Nicotinamide-nucleotide adenylyltransferase (169 aa).

This sequence belongs to the archaeal NMN adenylyltransferase family.

Its subcellular location is the cytoplasm. The catalysed reaction is beta-nicotinamide D-ribonucleotide + ATP + H(+) = diphosphate + NAD(+). Its pathway is cofactor biosynthesis; NAD(+) biosynthesis; NAD(+) from nicotinamide D-ribonucleotide: step 1/1. This Picrophilus torridus (strain ATCC 700027 / DSM 9790 / JCM 10055 / NBRC 100828 / KAW 2/3) protein is Nicotinamide-nucleotide adenylyltransferase.